The following is a 438-amino-acid chain: RNA polymerase sigma factor SigA (438 aa).

The segment covering 1 to 11 (MKKSKSKKKAA) has biased composition (basic residues). Positions 1-69 (MKKSKSKKKA…PLDLEGPLEA (69 aa)) are disordered. A compositionally biased stretch (basic and acidic residues) spans 12 to 26 (KAQEVEVKEPVKEPE). Composition is skewed to acidic residues over residues 27-45 (PLPELEAAEDLQDLPEPDP) and 52-69 (PELEDLADPLDLEGPLEA). Residues 93–128 (SDPVRQYLHEIGQVPLLTLEEEIDLARKVEEGMEAI) form a sigma-70 factor domain-1 region. Residues 202–272 (LIEANLRLVV…NRAIADQART (71 aa)) are sigma-70 factor domain-2. The Interaction with polymerase core subunit RpoC motif lies at 226–229 (DLIQ). The sigma-70 factor domain-3 stretch occupies residues 281–359 (ETINKLSRTA…DENLPSPVEA (79 aa)). A sigma-70 factor domain-4 region spans residues 372-424 (ALSKLSEREAMVLKLRKGLIDGREHTLEEVGAYFGVTRERIRQIENKALRKLK). Residues 398 to 417 (LEEVGAYFGVTRERIRQIEN) constitute a DNA-binding region (H-T-H motif).

This sequence belongs to the sigma-70 factor family. RpoD/SigA subfamily. In terms of assembly, interacts transiently with the RNA polymerase catalytic core formed by RpoA, RpoB, RpoC and RpoZ (2 alpha, 1 beta, 1 beta' and 1 omega subunit) to form the RNA polymerase holoenzyme that can initiate transcription.

The protein localises to the cytoplasm. Functionally, sigma factors are initiation factors that promote the attachment of RNA polymerase to specific initiation sites and are then released. This sigma factor is the primary sigma factor during exponential growth. This Thermus aquaticus protein is RNA polymerase sigma factor SigA.